A 374-amino-acid chain; its full sequence is 4-hydroxy-3-methylbut-2-en-1-yl diphosphate synthase (flavodoxin) (374 aa).

Positions 270, 273, 305, and 312 each coordinate [4Fe-4S] cluster.

This sequence belongs to the IspG family. It depends on [4Fe-4S] cluster as a cofactor.

The catalysed reaction is (2E)-4-hydroxy-3-methylbut-2-enyl diphosphate + oxidized [flavodoxin] + H2O + 2 H(+) = 2-C-methyl-D-erythritol 2,4-cyclic diphosphate + reduced [flavodoxin]. The protein operates within isoprenoid biosynthesis; isopentenyl diphosphate biosynthesis via DXP pathway; isopentenyl diphosphate from 1-deoxy-D-xylulose 5-phosphate: step 5/6. Its function is as follows. Converts 2C-methyl-D-erythritol 2,4-cyclodiphosphate (ME-2,4cPP) into 1-hydroxy-2-methyl-2-(E)-butenyl 4-diphosphate. This Vibrio cholerae serotype O1 (strain ATCC 39315 / El Tor Inaba N16961) protein is 4-hydroxy-3-methylbut-2-en-1-yl diphosphate synthase (flavodoxin).